The primary structure comprises 100 residues: Urease subunit gamma (100 aa).

It belongs to the urease gamma subunit family. Heterotrimer of UreA (gamma), UreB (beta) and UreC (alpha) subunits. Three heterotrimers associate to form the active enzyme.

It localises to the cytoplasm. The catalysed reaction is urea + 2 H2O + H(+) = hydrogencarbonate + 2 NH4(+). Its pathway is nitrogen metabolism; urea degradation; CO(2) and NH(3) from urea (urease route): step 1/1. The polypeptide is Urease subunit gamma (Pseudoalteromonas translucida (strain TAC 125)).